The sequence spans 256 residues: Ribonuclease HII (256 aa).

Positions 72–256 (QYIAGMDEVG…SFNPVPKYLN (185 aa)) constitute an RNase H type-2 domain. D78, E79, and D170 together coordinate a divalent metal cation.

The protein belongs to the RNase HII family. Requires Mn(2+) as cofactor. The cofactor is Mg(2+).

The protein resides in the cytoplasm. The catalysed reaction is Endonucleolytic cleavage to 5'-phosphomonoester.. Functionally, endonuclease that specifically degrades the RNA of RNA-DNA hybrids. The chain is Ribonuclease HII from Limosilactobacillus reuteri (strain DSM 20016) (Lactobacillus reuteri).